The primary structure comprises 228 residues: Protein ARV 2 (228 aa).

2 helical membrane-spanning segments follow: residues 37–57 and 80–100; these read EVADEYVECELLIIFIDLILH and LLWKLVLAYLLLDTYRSLLLR. An N-linked (GlcNAc...) asparagine glycan is attached at asparagine 107. 3 helical membrane passes run 123-143, 150-170, and 176-196; these read VLSANFAFVFSFAFAAKLMLV, ILLTILISSYVKIFLFAMPVW, and VIFIVDMLVLTSNAVALKVMT.

It belongs to the ARV1 family. In terms of tissue distribution, restricted to tissues in which cells are actively dividing or expanding. Mostly expressed in roots and flowers, and, to a lower extent, in stems and leaves.

It is found in the endoplasmic reticulum membrane. Functionally, mediator of sterol homeostasis involved in sterol uptake, trafficking and distribution into membranes. Also regulates the sphingolipid metabolism. The protein is Protein ARV 2 of Arabidopsis thaliana (Mouse-ear cress).